Here is a 783-residue protein sequence, read N- to C-terminus: Transcription factor Sp3 (783 aa).

A compositionally biased stretch (basic and acidic residues) spans 1–12 (MTAPEKPVKQEE). Positions 1–55 (MTAPEKPVKQEEMAALDVDGGGGGGGHGEYLQQQQQQQQQHGNGAAAAAAQDTQP) are disordered. Over residues 19–28 (DGGGGGGGHG) the composition is skewed to gly residues. Residues 29-51 (EYLQQQQQQQQQHGNGAAAAAAQ) show a composition bias toward low complexity. Ser-72 carries the post-translational modification Phosphoserine. A Glycyl lysine isopeptide (Lys-Gly) (interchain with G-Cter in SUMO) cross-link involves residue Lys-122. Residues 140 to 239 (QYVLPLQNLQ…IPQTGQVQVQ (100 aa)) form a transactivation domain (Gln-rich) region. A disordered region spans residues 302–340 (GQAMDSSDNSERTGERVSPDVNETNADTDLFVPTSSSSQ). The span at 310 to 319 (NSERTGERVS) shows a compositional bias: basic and acidic residues. Over residues 322-340 (VNETNADTDLFVPTSSSSQ) the composition is skewed to polar residues. The interval 352-501 (QQNTNSLTTT…TPVQTLTLGQ (150 aa)) is transactivation domain (Gln-rich). The short motif at 463-471 (ITWQTFQVQ) is the 9aaTAD element. The interval 536 to 622 (IQLHPGENAD…RGTNLGKKKQ (87 aa)) is repressor domain. Lys-553 carries the post-translational modification N6-acetyllysine; alternate. A Glycyl lysine isopeptide (Lys-Gly) (interchain with G-Cter in SUMO); alternate cross-link involves residue Lys-553. Residue Lys-553 forms a Glycyl lysine isopeptide (Lys-Gly) (interchain with G-Cter in SUMO1); alternate linkage. Lys-553 participates in a covalent cross-link: Glycyl lysine isopeptide (Lys-Gly) (interchain with G-Cter in SUMO2); alternate. Phosphoserine is present on residues Ser-565 and Ser-568. A Glycyl lysine isopeptide (Lys-Gly) (interchain with G-Cter in SUMO2) cross-link involves residue Lys-595. The C2H2-type 1 zinc finger occupies 623–647 (HICHIPGCGKVYGKTSHLRAHLRWH). The residue at position 648 (Ser-648) is a Phosphoserine. 2 C2H2-type zinc fingers span residues 653–677 (FICN…RRTH) and 683–705 (FVCP…IKTH).

It belongs to the Sp1 C2H2-type zinc-finger protein family. As to quaternary structure, interacts with HLTF; the interaction may be required for basal transcriptional activity of HLTF. Interacts with HDAC1; the interaction deacetylates SP3 and regulates its transcriptional activity. Interacts with HDAC2 (preferably the CK2-phosphorylated form); the interaction deacetylates SP3 and regulates its transcriptional activity. Ceramides can also regulate acetylation/deacetylation events through altering the interaction of HDAC with SP3. Interacts with MEIS2 isoform Meis2D and PBX1 isoform PBX1a. In terms of processing, acetylated by histone acetyltransferase p300, deacetylated by HDACs. Acetylation/deacetylation states regulate transcriptional activity. Acetylation appears to activate transcription. Alternate sumoylation and acetylation at Lys-553 also control transcriptional activity. Sumoylated on all isoforms. Sumoylated on 2 sites in longer isoforms with Lys-553 being the major site. Sumoylation at this site promotes nuclear localization to the nuclear periphery, nuclear dots and PML nuclear bodies. Sumoylation on Lys-553 represses the transactivation activity, except for the largest isoform which has little effect on transactivation. Alternate sumoylation and acetylation at Lys-553 also control transcriptional activity.

The protein resides in the nucleus. Its subcellular location is the PML body. Transcriptional factor that can act as an activator or repressor depending on isoform and/or post-translational modifications. Binds to GT and GC boxes promoter elements. Competes with SP1 for the GC-box promoters. Weak activator of transcription but can activate a number of genes involved in different processes such as cell-cycle regulation, hormone-induction and house-keeping. The protein is Transcription factor Sp3 (Sp3) of Mus musculus (Mouse).